The chain runs to 363 residues: Heme A synthase (363 aa).

8 helical membrane-spanning segments follow: residues 21–41 (ALVRGWLYVVLLVLFALVLVG), 107–127 (RLLARSVGLVFALPLLFFWVS), 138–158 (LVGILLLGGLQGAIGWWMVAS), 174–194 (HLTLAALIFTATMVVARGLAP), 207–227 (LAGFIVLLALIQIYLGGLVAG), 268–288 (FVHRLGAYTVFAVALWHMIAT), 301–321 (ATLLFVLVLVQASIGIGTLLM), and 323–343 (VPLHMALTHQGFALIVLGFAA). Residue His-270 participates in heme binding. His-331 contacts heme.

This sequence belongs to the COX15/CtaA family. Type 2 subfamily. Interacts with CtaB. Requires heme b as cofactor.

The protein resides in the cell membrane. The catalysed reaction is Fe(II)-heme o + 2 A + H2O = Fe(II)-heme a + 2 AH2. The protein operates within porphyrin-containing compound metabolism; heme A biosynthesis; heme A from heme O: step 1/1. In terms of biological role, catalyzes the conversion of heme O to heme A by two successive hydroxylations of the methyl group at C8. The first hydroxylation forms heme I, the second hydroxylation results in an unstable dihydroxymethyl group, which spontaneously dehydrates, resulting in the formyl group of heme A. In Mesorhizobium japonicum (strain LMG 29417 / CECT 9101 / MAFF 303099) (Mesorhizobium loti (strain MAFF 303099)), this protein is Heme A synthase.